The primary structure comprises 527 residues: DNA polymerase epsilon subunit 2 (527 aa).

This sequence belongs to the DNA polymerase epsilon subunit B family. In terms of assembly, component of the DNA polymerase epsilon complex consisting of four subunits: the catalytic subunit POLE and the accessory subunits POLE2, POLE3 and POLE4.

It localises to the nucleus. In terms of biological role, accessory component of the DNA polymerase epsilon complex. Participates in DNA repair and in chromosomal DNA replication. This chain is DNA polymerase epsilon subunit 2, found in Homo sapiens (Human).